The following is a 564-amino-acid chain: Lamassu protein LmuB (564 aa).

Functionally, component of antiviral defense system Lamassu type II, composed of LmuA and LmuB. Expression of Lamassu type II in B.subtilis (strain BEST7003) confers resistance to phage SpBeta. May be an ATPase. This chain is Lamassu protein LmuB, found in Bacillus cereus (strain VD014).